A 482-amino-acid polypeptide reads, in one-letter code: MKFIIKLFPEITIKSQSVRLRFIKILTGNIRNVLKHYDETLAVVRHWDNIEVRAKDEKQRLAIRDALTRIPGIHHILEVEDVPFTDMHDIFEKALVQYRDQLEGKTFCVRVKRRGKHDFSSIDVERYVGGGLNQHIESARVKLTNPDVTVHLEVEDDRLLLIKGRYEGIGGFPIGTQEDVLSLISGGFDSGVSSYMLMRRGCRVHYCFFNLGGAAHEIGVRQVAHYLWNRFGSSHRVRFVAINFEPVVGEILEKIDDGQMGVILKRMMVRAASKVAERYGVQALVTGEALGQVSSQTLTNLRLIDNVSDTLILRPLISYDKEHIINLARQIGTEDFARTMPEYCGVISKSPTVKAVKSKIEAEEEKFDFSILDKVVEEANNVDIREIAQQTEQEVVEVETVNGFGPNDVILDIRSVDEQEDKPLKVEGIDVVSLPFYKLSTKFGDLDQNRTWLLWCERGVMSRLQALYLREQGFNNVKVYRP.

The region spanning 61 to 165 is the THUMP domain; the sequence is LAIRDALTRI…DDRLLLIKGR (105 aa). ATP is bound by residues 183–184, Lys265, Gly287, and Gln296; that span reads LI. Cys344 and Cys456 form a disulfide bridge. The Rhodanese domain maps to 404–482; it reads FGPNDVILDI…GFNNVKVYRP (79 aa). The active-site Cysteine persulfide intermediate is the Cys456.

Belongs to the ThiI family.

The protein resides in the cytoplasm. The catalysed reaction is [ThiI sulfur-carrier protein]-S-sulfanyl-L-cysteine + a uridine in tRNA + 2 reduced [2Fe-2S]-[ferredoxin] + ATP + H(+) = [ThiI sulfur-carrier protein]-L-cysteine + a 4-thiouridine in tRNA + 2 oxidized [2Fe-2S]-[ferredoxin] + AMP + diphosphate. It carries out the reaction [ThiS sulfur-carrier protein]-C-terminal Gly-Gly-AMP + S-sulfanyl-L-cysteinyl-[cysteine desulfurase] + AH2 = [ThiS sulfur-carrier protein]-C-terminal-Gly-aminoethanethioate + L-cysteinyl-[cysteine desulfurase] + A + AMP + 2 H(+). Its pathway is cofactor biosynthesis; thiamine diphosphate biosynthesis. Its function is as follows. Catalyzes the ATP-dependent transfer of a sulfur to tRNA to produce 4-thiouridine in position 8 of tRNAs, which functions as a near-UV photosensor. Also catalyzes the transfer of sulfur to the sulfur carrier protein ThiS, forming ThiS-thiocarboxylate. This is a step in the synthesis of thiazole, in the thiamine biosynthesis pathway. The sulfur is donated as persulfide by IscS. The protein is tRNA sulfurtransferase of Shigella sonnei (strain Ss046).